A 246-amino-acid chain; its full sequence is Adenosine 5'-phosphosulfate reductase (246 aa).

Positions 131, 132, 214, and 217 each coordinate [4Fe-4S] cluster. The active-site Nucleophile; cysteine thiosulfonate intermediate is Cys-242.

This sequence belongs to the PAPS reductase family. CysH subfamily. The cofactor is [4Fe-4S] cluster.

It is found in the cytoplasm. It carries out the reaction [thioredoxin]-disulfide + sulfite + AMP + 2 H(+) = adenosine 5'-phosphosulfate + [thioredoxin]-dithiol. The protein operates within sulfur metabolism; hydrogen sulfide biosynthesis; sulfite from sulfate. In terms of biological role, catalyzes the formation of sulfite from adenosine 5'-phosphosulfate (APS) using thioredoxin as an electron donor. The polypeptide is Adenosine 5'-phosphosulfate reductase (Neisseria meningitidis serogroup B (strain ATCC BAA-335 / MC58)).